The following is a 228-amino-acid chain: Phosphoribosylformylglycinamidine synthase subunit PurQ (228 aa).

The Glutamine amidotransferase type-1 domain maps to 3-226 (FAVIVFPGSN…VKYWRETHVV (224 aa)). C86 acts as the Nucleophile in catalysis. Catalysis depends on residues H195 and E197.

In terms of assembly, part of the FGAM synthase complex composed of 1 PurL, 1 PurQ and 2 PurS subunits.

It is found in the cytoplasm. It catalyses the reaction N(2)-formyl-N(1)-(5-phospho-beta-D-ribosyl)glycinamide + L-glutamine + ATP + H2O = 2-formamido-N(1)-(5-O-phospho-beta-D-ribosyl)acetamidine + L-glutamate + ADP + phosphate + H(+). The catalysed reaction is L-glutamine + H2O = L-glutamate + NH4(+). It participates in purine metabolism; IMP biosynthesis via de novo pathway; 5-amino-1-(5-phospho-D-ribosyl)imidazole from N(2)-formyl-N(1)-(5-phospho-D-ribosyl)glycinamide: step 1/2. Its function is as follows. Part of the phosphoribosylformylglycinamidine synthase complex involved in the purines biosynthetic pathway. Catalyzes the ATP-dependent conversion of formylglycinamide ribonucleotide (FGAR) and glutamine to yield formylglycinamidine ribonucleotide (FGAM) and glutamate. The FGAM synthase complex is composed of three subunits. PurQ produces an ammonia molecule by converting glutamine to glutamate. PurL transfers the ammonia molecule to FGAR to form FGAM in an ATP-dependent manner. PurS interacts with PurQ and PurL and is thought to assist in the transfer of the ammonia molecule from PurQ to PurL. The polypeptide is Phosphoribosylformylglycinamidine synthase subunit PurQ (Geobacillus sp. (strain WCH70)).